We begin with the raw amino-acid sequence, 510 residues long: Cytochrome P450 94B1 (510 aa).

A helical transmembrane segment spans residues 3 to 23 (MLNAIILILFPIIGFVLIFSF). Cys450 lines the heme pocket.

Belongs to the cytochrome P450 family. Heme is required as a cofactor.

It is found in the membrane. It catalyses the reaction a jasmonyl-L-amino acid + reduced [NADPH--hemoprotein reductase] + O2 = a 12-hydroxyjasmonyl-L-alpha-amino acid + oxidized [NADPH--hemoprotein reductase] + H2O + H(+). Functionally, hydroxylase involved in the oxidation of the plant hormone jasmonoyl-L-isoleucine (JA-Ile), a bioactive phytohormone of the jasmonate-mediated signaling pathway. Converts JA-Ile to 12-hydroxy-JA-Ile. The sequence is that of Cytochrome P450 94B1 from Arabidopsis thaliana (Mouse-ear cress).